The following is a 304-amino-acid chain: Opsin-1 (304 aa).

Over 1–45 (MIHPEQVADMLRPTTSTTSSHVPGPVPTVVPTPTEYQTLGETGHR) the chain is Extracellular. The helical transmembrane segment at 46-66 (TLWVTFALMVLSSGIFALLSW) threads the bilayer. The helical transmembrane segment at 74 to 94 (LFHVITTLITVVASLSYFAMA) threads the bilayer. Residues 129–149 (YVDWALTTPLLLLELCLLAGV) traverse the membrane as a helical segment. Residues 154 to 174 (TLMAIVADVIMVLCGLFAALG) form a helical membrane-spanning segment. The helical transmembrane segment at 183–203 (WGWYTIGCFSYLFVIWHVALH) threads the bilayer. A helical membrane pass occupies residues 219-239 (FTGLAVFALLLWTAYPIIWGI). Residues 252–272 (ILIYTVLDLLAKPVFGFWLLL) traverse the membrane as a helical segment. N6-(retinylidene)lysine is present on lysine 263. Topologically, residues 273–304 (SHRAMPETNIDLPGYWSHGLATEGRIRIGEED) are cytoplasmic.

The protein belongs to the archaeal/bacterial/fungal opsin family. In terms of processing, binds all-trans retinal via a protonated Schiff base linkage.

The protein localises to the membrane. Its function is as follows. Could facilitate a sensory photoresponse. The polypeptide is Opsin-1 (nop-1) (Neurospora crassa (strain ATCC 24698 / 74-OR23-1A / CBS 708.71 / DSM 1257 / FGSC 987)).